We begin with the raw amino-acid sequence, 277 residues long: Phosphatidylglycerol--prolipoprotein diacylglyceryl transferase (277 aa).

Helical transmembrane passes span 18–38 (ISVK…LLLA), 51–71 (IIVD…RIYY), 89–109 (IWHG…TAII), and 116–136 (ISFW…QAIG). R137 is an a 1,2-diacyl-sn-glycero-3-phospho-(1'-sn-glycerol) binding site. The next 3 helical transmembrane spans lie at 177–197 (QPTF…LLII), 205–225 (GELF…IEGM), and 235–255 (FRVS…IIIY).

The protein belongs to the Lgt family.

It localises to the cell membrane. The enzyme catalyses L-cysteinyl-[prolipoprotein] + a 1,2-diacyl-sn-glycero-3-phospho-(1'-sn-glycerol) = an S-1,2-diacyl-sn-glyceryl-L-cysteinyl-[prolipoprotein] + sn-glycerol 1-phosphate + H(+). Its pathway is protein modification; lipoprotein biosynthesis (diacylglyceryl transfer). In terms of biological role, catalyzes the transfer of the diacylglyceryl group from phosphatidylglycerol to the sulfhydryl group of the N-terminal cysteine of a prolipoprotein, the first step in the formation of mature lipoproteins. This Listeria monocytogenes serotype 4a (strain HCC23) protein is Phosphatidylglycerol--prolipoprotein diacylglyceryl transferase.